Reading from the N-terminus, the 202-residue chain is NADH-quinone oxidoreductase subunit C (202 aa).

This sequence belongs to the complex I 30 kDa subunit family. NDH-1 is composed of 14 different subunits. Subunits NuoB, C, D, E, F, and G constitute the peripheral sector of the complex.

It is found in the cell inner membrane. The catalysed reaction is a quinone + NADH + 5 H(+)(in) = a quinol + NAD(+) + 4 H(+)(out). In terms of biological role, NDH-1 shuttles electrons from NADH, via FMN and iron-sulfur (Fe-S) centers, to quinones in the respiratory chain. The immediate electron acceptor for the enzyme in this species is believed to be ubiquinone. Couples the redox reaction to proton translocation (for every two electrons transferred, four hydrogen ions are translocated across the cytoplasmic membrane), and thus conserves the redox energy in a proton gradient. In Brucella abortus (strain 2308), this protein is NADH-quinone oxidoreductase subunit C.